Reading from the N-terminus, the 313-residue chain is Ribosomal RNA small subunit methyltransferase H (313 aa).

S-adenosyl-L-methionine is bound by residues 34-36 (GGH), D55, F82, D103, and Q110.

This sequence belongs to the methyltransferase superfamily. RsmH family.

The protein localises to the cytoplasm. The catalysed reaction is cytidine(1402) in 16S rRNA + S-adenosyl-L-methionine = N(4)-methylcytidine(1402) in 16S rRNA + S-adenosyl-L-homocysteine + H(+). Specifically methylates the N4 position of cytidine in position 1402 (C1402) of 16S rRNA. In Pelobacter propionicus (strain DSM 2379 / NBRC 103807 / OttBd1), this protein is Ribosomal RNA small subunit methyltransferase H.